An 87-amino-acid chain; its full sequence is Protein OPG096 (87 aa).

2 consecutive transmembrane segments (helical) span residues 39-59 and 67-87; these read PLIR…IFTV and QMLL…YFIL.

Belongs to the orthopoxvirus OPG096 family. Interacts with OPG158.

It localises to the virion membrane. It is found in the host cytoplasm. Its subcellular location is the host endoplasmic reticulum membrane. In terms of biological role, early protein involved in virion morphogenesis. Participates in the formation and elongation of crescent-shaped membrane precursors of immature virions in cytoplasmic factories. The protein is Protein OPG096 (OPG096) of Vaccinia virus (strain Copenhagen) (VACV).